The sequence spans 254 residues: tRNA (guanine-N(1)-)-methyltransferase (254 aa).

S-adenosyl-L-methionine is bound by residues G119 and 139–144 (IGDFVL).

The protein belongs to the RNA methyltransferase TrmD family. Homodimer.

Its subcellular location is the cytoplasm. The enzyme catalyses guanosine(37) in tRNA + S-adenosyl-L-methionine = N(1)-methylguanosine(37) in tRNA + S-adenosyl-L-homocysteine + H(+). Its function is as follows. Specifically methylates guanosine-37 in various tRNAs. This chain is tRNA (guanine-N(1)-)-methyltransferase, found in Dechloromonas aromatica (strain RCB).